Here is a 60-residue protein sequence, read N- to C-terminus: UPF0434 protein CKO_02153 (60 aa).

The protein belongs to the UPF0434 family.

The chain is UPF0434 protein CKO_02153 from Citrobacter koseri (strain ATCC BAA-895 / CDC 4225-83 / SGSC4696).